The primary structure comprises 90 residues: Small ribosomal subunit protein bS18 (90 aa).

It belongs to the bacterial ribosomal protein bS18 family. As to quaternary structure, part of the 30S ribosomal subunit. Forms a tight heterodimer with protein bS6.

Functionally, binds as a heterodimer with protein bS6 to the central domain of the 16S rRNA, where it helps stabilize the platform of the 30S subunit. This is Small ribosomal subunit protein bS18 from Bordetella bronchiseptica (strain ATCC BAA-588 / NCTC 13252 / RB50) (Alcaligenes bronchisepticus).